A 422-amino-acid chain; its full sequence is Testin (422 aa).

In terms of domain architecture, PET spans 92–199; the sequence is MILTNPVPAK…GDVKLPGELE (108 aa). Residues 198 to 224 form a disordered region; the sequence is LETKATDKNNVNSGDRSTSAAVGAMED. A compositionally biased stretch (polar residues) spans 205–217; that stretch reads KNNVNSGDRSTSA. 3 consecutive LIM zinc-binding domains span residues 234–297, 299–359, and 362–422; these read YSCY…CDSE, PRCA…KHAA, and QGCH…KMMS.

The protein belongs to the prickle / espinas / testin family.

It localises to the cytoplasm. Its subcellular location is the cell junction. It is found in the focal adhesion. Scaffold protein that may play a role in cell adhesion, cell spreading and in the reorganization of the actin cytoskeleton. May play a role in the regulation of cell proliferation. May inhibit cell growth. The polypeptide is Testin (TES) (Gallus gallus (Chicken)).